We begin with the raw amino-acid sequence, 415 residues long: uncharacterized protein (415 aa).

Residues Cys276 and Cys316 each contribute to the [4Fe-4S] cluster site.

In terms of assembly, homodimer. [4Fe-4S] cluster serves as cofactor.

This is an uncharacterized protein from Methanocaldococcus jannaschii (strain ATCC 43067 / DSM 2661 / JAL-1 / JCM 10045 / NBRC 100440) (Methanococcus jannaschii).